Here is a 267-residue protein sequence, read N- to C-terminus: MSNKVHLGHTARKRFGQNFLTDGNVINRIVGAIAPDNDHVMVEIGPGLGALTEPVANGIDKLTVVELDKDLVERLKEHPTLKHKLDIHQGDALKFDFSQLVEEGRQMKVFGNLPYNISTPLMFHLFEFAEQIENMHFMLQKEVVLRLSASPGTKAYGRLTVMAQYHCQVMPVLEVPPHSFTPAPKVDSAVVRLVPYKTKPWPCKDVDQLRHLTTTAFNMRRKTLRNNLKHMISDEEFAALGIDATLRPEQITVQQYVAMANLVIDKK.

The S-adenosyl-L-methionine site is built by Asn18, Leu20, Gly45, Glu66, Asp91, and Asn112.

This sequence belongs to the class I-like SAM-binding methyltransferase superfamily. rRNA adenine N(6)-methyltransferase family. RsmA subfamily.

The protein resides in the cytoplasm. The enzyme catalyses adenosine(1518)/adenosine(1519) in 16S rRNA + 4 S-adenosyl-L-methionine = N(6)-dimethyladenosine(1518)/N(6)-dimethyladenosine(1519) in 16S rRNA + 4 S-adenosyl-L-homocysteine + 4 H(+). Specifically dimethylates two adjacent adenosines (A1518 and A1519) in the loop of a conserved hairpin near the 3'-end of 16S rRNA in the 30S particle. May play a critical role in biogenesis of 30S subunits. The protein is Ribosomal RNA small subunit methyltransferase A of Shewanella sediminis (strain HAW-EB3).